A 92-amino-acid polypeptide reads, in one-letter code: Small ribosomal subunit protein uS19 (92 aa).

Belongs to the universal ribosomal protein uS19 family.

Its function is as follows. Protein S19 forms a complex with S13 that binds strongly to the 16S ribosomal RNA. This Desulfatibacillum aliphaticivorans protein is Small ribosomal subunit protein uS19.